Consider the following 520-residue polypeptide: Cyclin-L2 (520 aa).

2 cyclin-like regions span residues 81 to 183 (ELIQ…RVLK) and 196 to 280 (KIIV…KILQ). Residues 309–520 (RAKGLLPPGS…DHPGHSRHRR (212 aa)) form a disordered region. Phosphoserine is present on residues Ser330, Ser337, Ser347, and Ser350. Over residues 356–366 (RKMEGPKKAKG) the composition is skewed to basic and acidic residues. At Ser368 the chain carries Phosphoserine. An RS region spans residues 384-422 (RSREQSYSRSPSRSASPKRRKSDSGSTSGGSKSQSRSRS). A compositionally biased stretch (low complexity) spans 407–429 (SGSTSGGSKSQSRSRSRSDSPPR). Over residues 440–453 (SEVRGSRKSKDCKH) the composition is skewed to basic and acidic residues. Positions 454-471 (LTQKPHKSRSRSSSRSRS) are enriched in basic residues. Composition is skewed to basic and acidic residues over residues 472-481 (RSRERTDSSG) and 489-514 (YYRD…DHPG).

The protein belongs to the cyclin family. Cyclin L subfamily. In terms of assembly, interacts with CDK11A, CDK11B, CDK12, CDK13 and POLR2A, the hyperphosphorylated C-terminal domain (CTD) of RNA polymerase II. May form a ternary complex with CDK11B and casein kinase II (CKII). Interacts with pre-mRNA-splicing factors, including at least SRSF1, SRSF2 and SRSF7/SLU7.

It is found in the nucleus speckle. The protein resides in the nucleus. Its subcellular location is the nucleoplasm. Its function is as follows. Involved in pre-mRNA splicing. May induce cell death, possibly by acting on the transcription and RNA processing of apoptosis-related factors. The protein is Cyclin-L2 (Ccnl2) of Rattus norvegicus (Rat).